We begin with the raw amino-acid sequence, 206 residues long: Protein Mabiki (206 aa).

The disordered stretch occupies residues 54–77 (FSDQDADFPPLPKRRRLGSSSSSV).

Plays a role in inducing apoptosis and is involved in the repair of head patterning defects in the embryo caused by extra maternal copies of the homeotic gene bicoid. This is Protein Mabiki from Drosophila melanogaster (Fruit fly).